The following is a 151-amino-acid chain: MTGLERQLTEMLEAPVEATGYELVGLEFIRAGAHSTLRIYIDHENGINVDACAEVSHQVSAVLDVEDPISVAYSLEVSSPGLERPLFKAAHYEQFIGHEVSIVLKMAVANRRKWKGIIHSVDGETIAVTCEGQQEEFALSNISKANLIPKF.

It belongs to the RimP family.

The protein localises to the cytoplasm. In terms of biological role, required for maturation of 30S ribosomal subunits. The chain is Ribosome maturation factor RimP from Vibrio campbellii (strain ATCC BAA-1116).